Here is a 146-residue protein sequence, read N- to C-terminus: L-fucose mutarotase (146 aa).

Residue His-22 is the Proton donor of the active site. Residues Asp-30, Arg-109, and Tyr-131 to Asn-133 contribute to the substrate site.

Belongs to the RbsD / FucU family. FucU mutarotase subfamily. In terms of assembly, homodecamer.

It localises to the cytoplasm. It catalyses the reaction alpha-L-fucose = beta-L-fucose. It functions in the pathway carbohydrate metabolism; L-fucose metabolism. Functionally, involved in the anomeric conversion of L-fucose. This chain is L-fucose mutarotase, found in Glaesserella parasuis serovar 5 (strain SH0165) (Haemophilus parasuis).